A 217-amino-acid chain; its full sequence is MOB kinase activator 3A (217 aa).

4 residues coordinate Zn(2+): Cys83, Cys88, His165, and His170.

This sequence belongs to the MOB1/phocein family.

In terms of biological role, may regulate the activity of kinases. This Homo sapiens (Human) protein is MOB kinase activator 3A (MOB3A).